The following is a 517-amino-acid chain: GMP synthase [glutamine-hydrolyzing] (517 aa).

In terms of domain architecture, Glutamine amidotransferase type-1 spans 9–199 (RILILDFGSQ…VLNVCGCEGL (191 aa)). Cysteine 86 serves as the catalytic Nucleophile. Active-site residues include histidine 173 and glutamate 175. The region spanning 200-392 (WTSASIIEDA…LGLPYNMLYR (193 aa)) is the GMPS ATP-PPase domain. Residue 227–233 (SGGVDSS) coordinates ATP.

In terms of assembly, homodimer.

The catalysed reaction is XMP + L-glutamine + ATP + H2O = GMP + L-glutamate + AMP + diphosphate + 2 H(+). It functions in the pathway purine metabolism; GMP biosynthesis; GMP from XMP (L-Gln route): step 1/1. In terms of biological role, catalyzes the synthesis of GMP from XMP. The protein is GMP synthase [glutamine-hydrolyzing] of Aliivibrio fischeri (strain ATCC 700601 / ES114) (Vibrio fischeri).